A 149-amino-acid chain; its full sequence is MSRPSILVLHGPNLNLLGQREPGIYGSVTLEKINQQLLSLAESLKCNIEFYQSNHEGNLVDSIQEALGCHNGILINAAAYTHTSVAIRDALAAVAIPAVEVHLSNIYRREDFRHHSFIAPIVIGQISGFGAQSYSLGLQALIHHLQTQT.

Residue Y25 is the Proton acceptor of the active site. Positions 76, 82, and 89 each coordinate substrate. Residue H102 is the Proton donor of the active site. Substrate-binding positions include 103-104 (LS) and R113.

The protein belongs to the type-II 3-dehydroquinase family. In terms of assembly, homododecamer.

The catalysed reaction is 3-dehydroquinate = 3-dehydroshikimate + H2O. The protein operates within metabolic intermediate biosynthesis; chorismate biosynthesis; chorismate from D-erythrose 4-phosphate and phosphoenolpyruvate: step 3/7. Its function is as follows. Catalyzes a trans-dehydration via an enolate intermediate. The chain is 3-dehydroquinate dehydratase from Acaryochloris marina (strain MBIC 11017).